The chain runs to 132 residues: Interleukin-13 (132 aa).

An N-terminal signal peptide occupies residues 1-18 (MALLLTMVIALTCLGGFA). N-linked (GlcNAc...) asparagine glycosylation is found at Asn38, Asn49, Asn57, and Asn72. 2 disulfides stabilise this stretch: Cys48–Cys76 and Cys64–Cys90.

This sequence belongs to the IL-4/IL-13 family. As to quaternary structure, interacts with IL13RA2.

The protein resides in the secreted. Cytokine that plays important roles in allergic inflammation and immune response to parasite infection. Synergizes with IL2 in regulating interferon-gamma synthesis. Stimulates B-cell proliferation, and activation of eosinophils, basophils, and mast cells. Plays an important role in controlling IL33 activity by modulating the production of transmembrane and soluble forms of interleukin-1 receptor-like 1/IL1RL1. Displays the capacity to antagonize Th1-driven proinflammatory immune response and downregulates synthesis of many proinflammatory cytokines including IL1, IL6, IL10, IL12 and TNF-alpha through a mechanism that partially involves suppression of NF-kappa-B. Also functions on nonhematopoietic cells, including endothelial cells where it induces vascular cell adhesion protein 1/VCAM1, which is important in the recruitment of eosinophils. Exerts its biological effects through its receptors which comprises the IL4R chain and the IL13RA1 chain, to activate JAK1 and TYK2, leading to the activation of STAT6. Aside from IL13RA1, another receptor IL13RA2 acts as a high affinity decoy for IL13 and mediates internalization and depletion of extracellular IL13. The protein is Interleukin-13 (IL13) of Macaca thibetana (Pere David's macaque).